The following is a 464-amino-acid chain: L-aspartate oxidase (464 aa).

FAD contacts are provided by residues 11-14 and 40-47; these read GGLA and NSYLAQAG. The active-site Proton donor/acceptor is Arg251. FAD-binding positions include Glu332 and 348–349; that span reads SL.

It belongs to the FAD-dependent oxidoreductase 2 family. NadB subfamily. FAD serves as cofactor.

Its subcellular location is the cytoplasm. It catalyses the reaction L-aspartate + O2 = iminosuccinate + H2O2. It participates in cofactor biosynthesis; NAD(+) biosynthesis; iminoaspartate from L-aspartate (oxidase route): step 1/1. Catalyzes the oxidation of L-aspartate to iminoaspartate, the first step in the de novo biosynthesis of NAD(+). The chain is L-aspartate oxidase (nadB) from Pyrococcus abyssi (strain GE5 / Orsay).